Here is a 476-residue protein sequence, read N- to C-terminus: Probable isoprenylcysteine alpha-carbonyl methylesterase ICMEL1 (476 aa).

Over residues 92-104 the composition is skewed to polar residues; it reads NCLSAFSDDTNGT. The segment at 92–116 is disordered; the sequence is NCLSAFSDDTNGTADGGNNSGDRQT. 2 helical membrane-spanning segments follow: residues 153 to 173 and 208 to 228; these read FMAL…VGYY and VVAF…GSLL. Substrate contacts are provided by residues 214–216 and 285–287; these read GGA and QSA. Residues serine 286, aspartate 388, and histidine 420 contribute to the active site.

The protein belongs to the AB hydrolase superfamily. Isoprenylcysteine methylesterase family. As to expression, expressed in roots, rosette and cauline leaves, stems, flowers and siliques.

The protein localises to the endoplasmic reticulum membrane. It localises to the golgi apparatus membrane. The enzyme catalyses [protein]-C-terminal S-[(2E,6E)-farnesyl]-L-cysteine methyl ester + H2O = [protein]-C-terminal S-[(2E,6E)-farnesyl]-L-cysteine + methanol + H(+). In terms of biological role, catalyzes the demethylation of isoprenylcysteine methylesters. May be involved in the regulation of ABA signaling. The chain is Probable isoprenylcysteine alpha-carbonyl methylesterase ICMEL1 from Arabidopsis thaliana (Mouse-ear cress).